Here is a 304-residue protein sequence, read N- to C-terminus: Oxygen-dependent coproporphyrinogen-III oxidase (304 aa).

Residue serine 93 participates in substrate binding. Residues histidine 97 and histidine 107 each contribute to the a divalent metal cation site. Histidine 107 functions as the Proton donor in the catalytic mechanism. Residue asparagine 109–arginine 111 coordinates substrate. A divalent metal cation-binding residues include histidine 146 and histidine 176. Residues tyrosine 241–glycine 276 are important for dimerization. Glycine 259–arginine 261 serves as a coordination point for substrate.

Belongs to the aerobic coproporphyrinogen-III oxidase family. In terms of assembly, homodimer. A divalent metal cation is required as a cofactor.

Its subcellular location is the cytoplasm. It carries out the reaction coproporphyrinogen III + O2 + 2 H(+) = protoporphyrinogen IX + 2 CO2 + 2 H2O. Its pathway is porphyrin-containing compound metabolism; protoporphyrin-IX biosynthesis; protoporphyrinogen-IX from coproporphyrinogen-III (O2 route): step 1/1. Functionally, involved in the heme biosynthesis. Catalyzes the aerobic oxidative decarboxylation of propionate groups of rings A and B of coproporphyrinogen-III to yield the vinyl groups in protoporphyrinogen-IX. This Pseudomonas syringae pv. syringae (strain B728a) protein is Oxygen-dependent coproporphyrinogen-III oxidase.